The chain runs to 80 residues: Exodeoxyribonuclease 7 small subunit (80 aa).

The protein belongs to the XseB family. Heterooligomer composed of large and small subunits.

Its subcellular location is the cytoplasm. It carries out the reaction Exonucleolytic cleavage in either 5'- to 3'- or 3'- to 5'-direction to yield nucleoside 5'-phosphates.. Its function is as follows. Bidirectionally degrades single-stranded DNA into large acid-insoluble oligonucleotides, which are then degraded further into small acid-soluble oligonucleotides. This Escherichia coli O6:K15:H31 (strain 536 / UPEC) protein is Exodeoxyribonuclease 7 small subunit.